Consider the following 2559-residue polypeptide: Nonribosomal peptide synthetase asqK (2559 aa).

The interval 90–474 (YRPSHTAIHA…SRKDSQVKIR (385 aa)) is adenylation 1. Positions 593-669 (TNIEQLVHEL…SLVHYPAGLE (77 aa)) constitute a Carrier 1 domain. Position 627 is an O-(pantetheine 4'-phosphoryl)serine (Ser-627). A condensation 1 region spans residues 695–989 (TVEQSFSQAR…GNVQCIRTKV (295 aa)). Positions 1155–1562 (FDEQVRAQTD…GRMDQQVKVR (408 aa)) are adenylation 2. Residues 1681–1776 (LEIGTGSGMI…NTIKDLVRQG (96 aa)) are methyltransferase. Positions 2090-2164 (AFTSEIERAV…GLAQHLQGLG (75 aa)) constitute a Carrier 2 domain. The residue at position 2124 (Ser-2124) is an O-(pantetheine 4'-phosphoryl)serine. A condensation 2 region spans residues 2261–2409 (FDGVSLSAIL…VNRCLLRVKV (149 aa)).

Belongs to the NRP synthetase family.

It catalyses the reaction O-methyl-L-tyrosine + anthranilate + S-adenosyl-L-methionine + 2 ATP = (-)-4'-methoxycyclopeptine + 2 AMP + S-adenosyl-L-homocysteine + 2 diphosphate + 2 H(+). The catalysed reaction is anthranilate + L-phenylalanine + S-adenosyl-L-methionine + 2 ATP = cyclopeptine + 2 AMP + S-adenosyl-L-homocysteine + 2 diphosphate + 2 H(+). It functions in the pathway secondary metabolite biosynthesis. It participates in alkaloid biosynthesis. The protein operates within mycotoxin biosynthesis. Nonribosomal peptide synthetase; part of the gene cluster that mediates the biosynthesis of the aspoquinolone mycotoxins. The first stage is catalyzed by the nonribosomal peptide synthetase asqK that condenses anthranilic acid and O-methyl-L-tyrosine to produce 4'-methoxycyclopeptin. AsqK is also able to use anthranilic acid and L-phenylalanine as substrates to produce cyclopeptin, but at a tenfold lower rate. Within the pathway, 4'-methoxycyclopeptin is then converted to 4'-methoxydehydrocyclopeptin by the ketoglutarate-dependent dioxygenase asqJ. AsqJ also converts its first product 4'-methoxydehydrocyclopeptin to 4'-methoxycyclopenin. The following conversion of 4'-methoxycyclopenin into 4'-methoxyviridicatin is catalyzed by the cyclopenase asqI. 4'-methoxyviridicatin is the precursor of quinolone natural products, and is further converted to quinolinone B. The prenyltransferase asqH1 then catalyzes the canonical Friedel-Crafts alkylation of quinolinone B with dimethylallyl cation to yield dimethylallyl quinolone, which is subjected to FAD-dependent dehydrogenation by the FAD-linked oxidoreductase asqF to yield conjugated aryl diene. The delta(3') double bond then serves as the site of the second alkylation with DMAPP catalyzed by the prenyltransferase asqH2 to yield a carbenium ion intermediate, which can be attacked by H(2)O to yield a styrenyl quinolone containing a C3'-hydroxyprenyl chain. The FAD-dependent monooxygenase asqG performs epoxidation of the terminal C7'-C8' olefin. Finally, after dehydratation of the epoxide at C3 by asqC, the quinolone epoxide rearrangement protein asqO catalyzes an enzymatic 3-exo-tet cyclization to yield the cyclopropyl-THF ring system in aspoquinolone. The chain is Nonribosomal peptide synthetase asqK from Emericella nidulans (strain FGSC A4 / ATCC 38163 / CBS 112.46 / NRRL 194 / M139) (Aspergillus nidulans).